The chain runs to 223 residues: Retbindin (223 aa).

A signal peptide spans 1–30 (MANRGHTQPRALAWALGLTLVWILLGACGG). Cystine bridges form between C73-C143, C80-C120, C113-C157, and C126-C139.

It belongs to the folate receptor family. Not N-glycosylated.

The protein resides in the secreted. It localises to the extracellular space. It is found in the extracellular matrix. The protein localises to the interphotoreceptor matrix. Its subcellular location is the cell membrane. Functionally, riboflavin-binding protein which might have a role in retinal flavin transport. In Canis lupus familiaris (Dog), this protein is Retbindin (RTBDN).